A 538-amino-acid polypeptide reads, in one-letter code: MEIKEISVPQQGVVADYMNGKKEIQSCFDYMLTEDAFKQRVQDLREREFFRQDLVTHLLEYNTKLQAGEATIQNVKALGDENTYVVIAGQQAGLLTGPLYTIHKIISVLQLAKEKEESLGVKVVPVFWIAGEDHDMDEINHTFVTKNKKIKKTIFHDRNPKKASASESELSLEDCRKWIEEIFKTYPETNFTKDVLQFVDDSLRKSNTYVDFFGHLIMKMFVNSGLILVDSHHPELRKLEVPFFKQIVSKYKEVQEGLHNQQEVIKELGYKPIIETKSNVVHIFMEIDNERVLLEDNQGKFVGKDGTYSFSYEELIEEMERSPERFSNNVVTRPLMQEYVFPTLAFIGGPGELAYWSELQQVFHTIGFRMPPVVPRITITYIERDIATDLHDLQLQERDPFLNNVDKLRENWLSNQIEEPIDDRFVEAKKEIMNIHTSLQQFVKEIDPGLSAFAGKNEFKINEQIELLERMLKRNVEKKHEVELNKFRRIQFALRPLGAPQERVWNVCYYLNQFGLDFVDRVMEKPFSWNGKHHVIKL.

Residues 460–484 (KINEQIELLERMLKRNVEKKHEVEL) are a coiled coil.

The protein belongs to the BshC family.

Functionally, involved in bacillithiol (BSH) biosynthesis. May catalyze the last step of the pathway, the addition of cysteine to glucosamine malate (GlcN-Mal) to generate BSH. The protein is Putative cysteine ligase BshC of Bacillus cereus (strain AH820).